A 244-amino-acid chain; its full sequence is MSESIKVRAQRQAHCKDCSLSGLCLPLSLNMQDMDALDDIVKRGRPLKKGETLFRQGDTFSSVFAVRSGALRTFSVTDGGEEQITGFHLPSELVGLSGMDTEMYPVTAQALETTSVCEIPFERLDELSVLLPQLRRQLMRIMSREIRDDQQMMLLLSKKTADERIATFLINLSARFSARGFSANQFRLPMSRNEIGNYLGLAVETVSRVFTRFQQNGLLEAEGKEVRILDSIGLCALAGGAMDA.

Residues 159–232 (KTADERIATF…GKEVRILDSI (74 aa)) form the HTH crp-type domain. Positions 192–211 (RNEIGNYLGLAVETVSRVFT) form a DNA-binding region, H-T-H motif.

Its function is as follows. Transcriptional regulator of arginine deiminase. The chain is Transcriptional activator protein FnrA (fnrA) from Stutzerimonas stutzeri (Pseudomonas stutzeri).